The sequence spans 485 residues: Alginate biosynthesis protein AlgA (485 aa).

The protein belongs to the mannose-6-phosphate isomerase type 2 family. As to quaternary structure, monomer. The cofactor is Co(2+).

The enzyme catalyses D-mannose 6-phosphate = D-fructose 6-phosphate. The catalysed reaction is alpha-D-mannose 1-phosphate + GTP + H(+) = GDP-alpha-D-mannose + diphosphate. The protein operates within nucleotide-sugar biosynthesis; GDP-alpha-D-mannose biosynthesis; GDP-alpha-D-mannose from alpha-D-mannose 1-phosphate (GTP route): step 1/1. It functions in the pathway nucleotide-sugar biosynthesis; GDP-alpha-D-mannose biosynthesis; alpha-D-mannose 1-phosphate from D-fructose 6-phosphate: step 1/2. Its function is as follows. Produces a precursor for alginate polymerization. The alginate layer provides a protective barrier against host immune defenses and antibiotics. The chain is Alginate biosynthesis protein AlgA (algA) from Pseudomonas putida (strain ATCC 47054 / DSM 6125 / CFBP 8728 / NCIMB 11950 / KT2440).